A 95-amino-acid polypeptide reads, in one-letter code: MADEKPKEGVKTENNDHINLKVAGQDGSVVQFKIKRHTPLSKLMKAYCERQGLSMRQIRFRFDGQPINETDTPAQLEMEDEDTIDVFQQQTGGVY.

Met-1 participates in a covalent cross-link: Peptide (Met-Gly) (interchain with G-Cter in ubiquitin). Glycyl lysine isopeptide (Lys-Gly) (interchain with G-Cter in SUMO2) cross-links involve residues Lys-5 and Lys-7. Lys-11 carries the post-translational modification N6-acetyllysine; alternate. Lys-11 participates in a covalent cross-link: Glycyl lysine isopeptide (Lys-Gly) (interchain with G-Cter in SUMO); alternate. Lys-11 participates in a covalent cross-link: Glycyl lysine isopeptide (Lys-Gly) (interchain with G-Cter in SUMO1); alternate. Lys-11 participates in a covalent cross-link: Glycyl lysine isopeptide (Lys-Gly) (interchain with G-Cter in SUMO2); alternate. Lys-11 is covalently cross-linked (Glycyl lysine isopeptide (Lys-Gly) (interchain with G-Cter in ubiquitin); alternate). One can recognise a Ubiquitin-like domain in the interval 16 to 95 (DHINLKVAGQ…VFQQQTGGVY (80 aa)). Lys-21 participates in a covalent cross-link: Glycyl lysine isopeptide (Lys-Gly) (interchain with G-Cter in SUMO2). Gly-93 is covalently cross-linked (Glycyl lysine isopeptide (Gly-Lys) (interchain with K-? in acceptor proteins)). The propeptide occupies 94 to 95 (VY).

Belongs to the ubiquitin family. SUMO subfamily. In terms of assembly, interacts with SAE2 and UBE2I. Interacts with ZNF451. Identified in a complex with ZNF451 and UBE2I/UBC9, where one ZNF451 interacts with one UBE2I/UBC9 and two SUMO2 chains, one bound to the UBE2I/UBC9 active site and the other to another region of the same UBE2I/UBC9 molecule. Covalently attached to a number of proteins. Interacts with PELP1. Interacts with USP25; the interaction sumoylates USP25. Interacts with SIMC1, CASP8AP2, RNF111 and SOBP (via SIM domains). Interacts with MTA1. Interacts with HINT1. Interacts with GCNA (via SIM domains); this interaction allows the GCNA recruitment to DPCs sites. Post-translationally, polymeric chains can be formed through Lys-11 cross-linking. Polymeric SUMO2 chains undergo 'Lys-6'-, 'Lys-11'-, 'Lys-48'- and 'Lys-63'-linked polyubiquitination by RNF4. Cleavage of precursor form by SENP1 or SENP2 is necessary for function. In terms of processing, monoubiquitinated N-terminally by UBE2W, which primes it for RNF4-dependent polyubiquitination by the UBE2V1-UBE2N heterodimer.

It localises to the nucleus. The protein resides in the PML body. Functionally, ubiquitin-like protein that can be covalently attached to proteins as a monomer or as a lysine-linked polymer. Covalent attachment via an isopeptide bond to its substrates requires prior activation by the E1 complex SAE1-SAE2 and linkage to the E2 enzyme UBE2I, and can be promoted by an E3 ligase such as PIAS1-4, RANBP2 or CBX4. This post-translational modification on lysine residues of proteins plays a crucial role in a number of cellular processes such as nuclear transport, DNA replication and repair, mitosis and signal transduction. Polymeric SUMO2 chains are also susceptible to polyubiquitination which functions as a signal for proteasomal degradation of modified proteins. Plays a role in the regulation of sumoylation status of SETX. The protein is Small ubiquitin-related modifier 2 of Bos taurus (Bovine).